Consider the following 187-residue polypeptide: Hypoxanthine/guanine phosphoribosyltransferase (187 aa).

The protein belongs to the purine/pyrimidine phosphoribosyltransferase family. Archaeal HPRT subfamily. Homodimer.

It is found in the cytoplasm. It carries out the reaction IMP + diphosphate = hypoxanthine + 5-phospho-alpha-D-ribose 1-diphosphate. It catalyses the reaction GMP + diphosphate = guanine + 5-phospho-alpha-D-ribose 1-diphosphate. It participates in purine metabolism; IMP biosynthesis via salvage pathway; IMP from hypoxanthine: step 1/1. Catalyzes a salvage reaction resulting in the formation of IMP that is energically less costly than de novo synthesis. This chain is Hypoxanthine/guanine phosphoribosyltransferase, found in Ferroglobus placidus (strain DSM 10642 / AEDII12DO).